We begin with the raw amino-acid sequence, 146 residues long: Cystatin-C (146 aa).

Positions 1–26 (MAGPLRAPLLLLAILAVALAVSPAAG) are cleaved as a signal peptide. The residue at position 43 (Ser-43) is a Phosphoserine; by FAM20C. Residues 81-85 (QIVAG) carry the Secondary area of contact motif. Intrachain disulfides connect Cys-99/Cys-109 and Cys-123/Cys-143.

It belongs to the cystatin family. In terms of assembly, homodimer. The Thr-25 variant is O-glycosylated with a core 1 or possibly core 8 glycan. The signal peptide of the O-glycosylated Thr-25 variant is cleaved between Ala-20 and Val-21. As to expression, expressed in submandibular and sublingual saliva but not in parotid saliva (at protein level). Expressed in various body fluids, such as the cerebrospinal fluid and plasma. Expressed in highest levels in the epididymis, vas deferens, brain, thymus, and ovary and the lowest in the submandibular gland.

It is found in the secreted. Functionally, as an inhibitor of cysteine proteinases, this protein is thought to serve an important physiological role as a local regulator of this enzyme activity. The protein is Cystatin-C (CST3) of Homo sapiens (Human).